The chain runs to 305 residues: UDP-3-O-acyl-N-acetylglucosamine deacetylase (305 aa).

Zn(2+) contacts are provided by His-79, His-238, and Asp-242. Residue His-265 is the Proton donor of the active site.

This sequence belongs to the LpxC family. Requires Zn(2+) as cofactor.

The catalysed reaction is a UDP-3-O-[(3R)-3-hydroxyacyl]-N-acetyl-alpha-D-glucosamine + H2O = a UDP-3-O-[(3R)-3-hydroxyacyl]-alpha-D-glucosamine + acetate. It functions in the pathway glycolipid biosynthesis; lipid IV(A) biosynthesis; lipid IV(A) from (3R)-3-hydroxytetradecanoyl-[acyl-carrier-protein] and UDP-N-acetyl-alpha-D-glucosamine: step 2/6. Catalyzes the hydrolysis of UDP-3-O-myristoyl-N-acetylglucosamine to form UDP-3-O-myristoylglucosamine and acetate, the committed step in lipid A biosynthesis. The sequence is that of UDP-3-O-acyl-N-acetylglucosamine deacetylase from Salmonella typhi.